Consider the following 508-residue polypeptide: Small ribosomal subunit protein uS3m (508 aa).

This sequence belongs to the universal ribosomal protein uS3 family. As to quaternary structure, component of the mitochondrial small ribosomal subunit (mt-SSU). Mature N.crassa 74S mitochondrial ribosomes consist of a small (37S) and a large (54S) subunit. The 37S small subunit contains a 16S ribosomal RNA (16S mt-rRNA) and 32 different proteins. The 54S large subunit contains a 23S rRNA (23S mt-rRNA) and 42 different proteins. uS3m, uS4m and uS5m form the narrow entry site of the mRNA channel.

The protein localises to the mitochondrion. Functionally, component of the mitochondrial ribosome (mitoribosome), a dedicated translation machinery responsible for the synthesis of mitochondrial genome-encoded proteins, including at least some of the essential transmembrane subunits of the mitochondrial respiratory chain. The mitoribosomes are attached to the mitochondrial inner membrane and translation products are cotranslationally integrated into the membrane. uS3m is essential for mitochondrial protein synthesis and required for the maturation of small ribosomal subunits. The sequence is that of Small ribosomal subunit protein uS3m (var1) from Neurospora crassa (strain ATCC 24698 / 74-OR23-1A / CBS 708.71 / DSM 1257 / FGSC 987).